The chain runs to 274 residues: 2,3,4,5-tetrahydropyridine-2,6-dicarboxylate N-succinyltransferase (274 aa).

R105 and D142 together coordinate substrate.

It belongs to the transferase hexapeptide repeat family. In terms of assembly, homotrimer.

The protein resides in the cytoplasm. The enzyme catalyses (S)-2,3,4,5-tetrahydrodipicolinate + succinyl-CoA + H2O = (S)-2-succinylamino-6-oxoheptanedioate + CoA. Its pathway is amino-acid biosynthesis; L-lysine biosynthesis via DAP pathway; LL-2,6-diaminopimelate from (S)-tetrahydrodipicolinate (succinylase route): step 1/3. The polypeptide is 2,3,4,5-tetrahydropyridine-2,6-dicarboxylate N-succinyltransferase (Thiobacillus denitrificans (strain ATCC 25259 / T1)).